A 445-amino-acid chain; its full sequence is FAS-associated factor 2-B (445 aa).

Positions Asp-12 to Gln-48 constitute a UBA domain. Residues Ser-275–Glu-353 are a coiled coil. The tract at residues Arg-302–Val-355 is disordered. The span at Ala-303–Glu-348 shows a compositional bias: basic and acidic residues. Residues Asp-357 to Val-439 form the UBX domain.

It is found in the cytoplasm. It localises to the lipid droplet. The protein resides in the endoplasmic reticulum. Functionally, plays an important role in endoplasmic reticulum-associated degradation (ERAD) that mediates ubiquitin-dependent degradation of misfolded endoplasmic reticulum proteins. Involved in inhibition of lipid droplet degradation. Involved in stress granule disassembly. In Xenopus laevis (African clawed frog), this protein is FAS-associated factor 2-B (faf2-b).